A 615-amino-acid chain; its full sequence is Cysteine-rich receptor-like protein kinase 1 (615 aa).

A signal peptide spans 1–28 (MQICASIAQFLAWVSFLVLLATVGSSSS). Gnk2-homologous domains follow at residues 29–131 (SESL…DRDF) and 137–237 (DPTF…THKF). Over 29-266 (SESLLNCQPL…SFFPHLSDRD (238 aa)) the chain is Extracellular. N-linked (GlcNAc...) asparagine glycosylation is found at asparagine 100 and asparagine 165. A helical transmembrane segment spans residues 267-287 (VTRLAIAAISLSILTSLGAFI). Residues 288-615 (SYRRVSRKRK…VLMPDEETRV (328 aa)) are Cytoplasmic-facing. The Protein kinase domain occupies 318 to 602 (FHDSMKLGQG…FEYPKQPPFL (285 aa)). Residues 324–332 (LGQGGAGSV) and lysine 346 contribute to the ATP site. Aspartate 443 acts as the Proton acceptor in catalysis.

This sequence belongs to the protein kinase superfamily. Ser/Thr protein kinase family. CRK subfamily. As to expression, expressed in the whole plant at low levels.

The protein resides in the membrane. The enzyme catalyses L-seryl-[protein] + ATP = O-phospho-L-seryl-[protein] + ADP + H(+). It catalyses the reaction L-threonyl-[protein] + ATP = O-phospho-L-threonyl-[protein] + ADP + H(+). In Arabidopsis thaliana (Mouse-ear cress), this protein is Cysteine-rich receptor-like protein kinase 1.